Reading from the N-terminus, the 130-residue chain is MAENQYYGTGRRKSSAARVFIKPGTGNIVINKRSLEVYFGRPTARMVVNQPLELVEMTDKLDLFITVSGGGISGQAGAIRHGITRALMQFDETLRPALRAAGYVTRDARCVERKKVGLRKARKKPQFSKR.

Belongs to the universal ribosomal protein uS9 family.

The chain is Small ribosomal subunit protein uS9 from Aliivibrio salmonicida (strain LFI1238) (Vibrio salmonicida (strain LFI1238)).